The chain runs to 436 residues: Glucose-1-phosphate adenylyltransferase (436 aa).

Alpha-D-glucose 1-phosphate contacts are provided by residues Tyr112, Gly178, 193–194 (EK), and Ser211.

It belongs to the bacterial/plant glucose-1-phosphate adenylyltransferase family. Homotetramer.

The enzyme catalyses alpha-D-glucose 1-phosphate + ATP + H(+) = ADP-alpha-D-glucose + diphosphate. Its pathway is glycan biosynthesis; glycogen biosynthesis. Its function is as follows. Involved in the biosynthesis of ADP-glucose, a building block required for the elongation reactions to produce glycogen. Catalyzes the reaction between ATP and alpha-D-glucose 1-phosphate (G1P) to produce pyrophosphate and ADP-Glc. This Histophilus somni (strain 129Pt) (Haemophilus somnus) protein is Glucose-1-phosphate adenylyltransferase.